Reading from the N-terminus, the 631-residue chain is Phosphomethylpyrimidine synthase (631 aa).

Substrate is bound by residues N239, M268, Y297, H333, 353 to 355, 394 to 397, and E433; these read SRG and DGLR. Residue H437 participates in Zn(2+) binding. Y460 contacts substrate. H501 provides a ligand contact to Zn(2+). [4Fe-4S] cluster is bound by residues C581, C584, and C589.

Belongs to the ThiC family. As to quaternary structure, homodimer. [4Fe-4S] cluster serves as cofactor.

It catalyses the reaction 5-amino-1-(5-phospho-beta-D-ribosyl)imidazole + S-adenosyl-L-methionine = 4-amino-2-methyl-5-(phosphooxymethyl)pyrimidine + CO + 5'-deoxyadenosine + formate + L-methionine + 3 H(+). It functions in the pathway cofactor biosynthesis; thiamine diphosphate biosynthesis. Its function is as follows. Catalyzes the synthesis of the hydroxymethylpyrimidine phosphate (HMP-P) moiety of thiamine from aminoimidazole ribotide (AIR) in a radical S-adenosyl-L-methionine (SAM)-dependent reaction. The polypeptide is Phosphomethylpyrimidine synthase (Salmonella enteritidis PT4 (strain P125109)).